Reading from the N-terminus, the 903-residue chain is Zinc finger CCCH domain-containing protein 27 (903 aa).

Residues 1–144 (MIKESSSPAL…GRNGAPWAQH (144 aa)) are disordered. The span at 11-24 (DADKIEVPSPKDEN) shows a compositional bias: basic and acidic residues. Over residues 33–46 (TDNEDFEISDDDDD) the composition is skewed to acidic residues. Positions 86-96 (SHGEAQKDFFP) are enriched in basic and acidic residues. The C3H1-type zinc finger occupies 225 to 253 (GMPRQRCRDFEERGFCLRGDMCPMEHGLN). The segment at 390 to 456 (ASKKLGHGKT…GRQSNRASHK (67 aa)) is disordered. Low complexity predominate over residues 397-410 (GKTANATSTSATGN). The segment covering 432-441 (KDSNGQSNSR) has biased composition (polar residues). Positions 459–531 (RTLYVNGIPL…RFIKLWWANR (73 aa)) constitute an RRM domain. 3 disordered regions span residues 545–609 (KSSH…DTKR), 642–720 (KQKG…QTSP), and 826–903 (TNHS…DVSQ). Polar residues predominate over residues 556–576 (SVPQPSSSNRGKENLQSATPR). The segment covering 577-587 (ASSGSSAEASG) has biased composition (low complexity). The stretch at 608–649 (KRQESLELLEELRKKQEILAQKRDEFRRQLEKLAKQKGLANS) forms a coiled coil. Low complexity predominate over residues 693 to 708 (SGELASSSHKSSATSA). Residues 826–886 (TNHSRFQKTS…SMPTATSAKT (61 aa)) are compositionally biased toward polar residues.

This Oryza sativa subsp. japonica (Rice) protein is Zinc finger CCCH domain-containing protein 27.